The chain runs to 147 residues: Small ribosomal subunit protein bS16 (147 aa).

The interval 89-147 (AWTHGNNPKKAEPGKKAQERAKERADKAEAKAAAAAEAAAAPAEEAPAEAAPAEETSES) is disordered. A compositionally biased stretch (basic and acidic residues) spans 97-118 (KKAEPGKKAQERAKERADKAEA). Residues 119-147 (KAAAAAEAAAAPAEEAPAEAAPAEETSES) show a composition bias toward low complexity.

This sequence belongs to the bacterial ribosomal protein bS16 family.

The polypeptide is Small ribosomal subunit protein bS16 (Hyphomonas neptunium (strain ATCC 15444)).